The chain runs to 305 residues: UDP-3-O-acyl-N-acetylglucosamine deacetylase (305 aa).

Zn(2+)-binding residues include H79, H238, and D242. The Proton donor role is filled by H265.

Belongs to the LpxC family. Requires Zn(2+) as cofactor.

The catalysed reaction is a UDP-3-O-[(3R)-3-hydroxyacyl]-N-acetyl-alpha-D-glucosamine + H2O = a UDP-3-O-[(3R)-3-hydroxyacyl]-alpha-D-glucosamine + acetate. The protein operates within glycolipid biosynthesis; lipid IV(A) biosynthesis; lipid IV(A) from (3R)-3-hydroxytetradecanoyl-[acyl-carrier-protein] and UDP-N-acetyl-alpha-D-glucosamine: step 2/6. Functionally, catalyzes the hydrolysis of UDP-3-O-myristoyl-N-acetylglucosamine to form UDP-3-O-myristoylglucosamine and acetate, the committed step in lipid A biosynthesis. This chain is UDP-3-O-acyl-N-acetylglucosamine deacetylase, found in Klebsiella pneumoniae (strain 342).